The primary structure comprises 180 residues: Crossover junction endodeoxyribonuclease RuvC (180 aa).

Catalysis depends on residues D7, E66, and D138. 3 residues coordinate Mg(2+): D7, E66, and D138.

This sequence belongs to the RuvC family. As to quaternary structure, homodimer which binds Holliday junction (HJ) DNA. The HJ becomes 2-fold symmetrical on binding to RuvC with unstacked arms; it has a different conformation from HJ DNA in complex with RuvA. In the full resolvosome a probable DNA-RuvA(4)-RuvB(12)-RuvC(2) complex forms which resolves the HJ. Mg(2+) is required as a cofactor.

The protein localises to the cytoplasm. The catalysed reaction is Endonucleolytic cleavage at a junction such as a reciprocal single-stranded crossover between two homologous DNA duplexes (Holliday junction).. Its function is as follows. The RuvA-RuvB-RuvC complex processes Holliday junction (HJ) DNA during genetic recombination and DNA repair. Endonuclease that resolves HJ intermediates. Cleaves cruciform DNA by making single-stranded nicks across the HJ at symmetrical positions within the homologous arms, yielding a 5'-phosphate and a 3'-hydroxyl group; requires a central core of homology in the junction. The consensus cleavage sequence is 5'-(A/T)TT(C/G)-3'. Cleavage occurs on the 3'-side of the TT dinucleotide at the point of strand exchange. HJ branch migration catalyzed by RuvA-RuvB allows RuvC to scan DNA until it finds its consensus sequence, where it cleaves and resolves the cruciform DNA. The polypeptide is Crossover junction endodeoxyribonuclease RuvC (Burkholderia orbicola (strain MC0-3)).